The chain runs to 344 residues: MTHLDHLLTEAIELFNRTEDLAELEQVKARYLGRHGQLTELLKGLGKIPPEERPAAGSRINQAKESLEAALSRRREAIQEKKLEEQLIEEKLDVTLSGRGTGMGGLHPITLALERIQSLFHSVGFTVASGPEIETDFYNFTALNIPESHPARAMHDTFYVDDENGGASEHLLRTHTSPVQIRYMESNPPPLKVIAPGRVYRCDSDLTHTPMFHQVEGLWIDESANFSALKGILSDFMQHFFERDDLPVRFRPSFFPFTEPSAEMDIGCVMCKTGCRVCSYTGWLEVLGCGMVHPNVFKHVNIDSQKYVGFAFGLGVERLAMLRYGVNDLRLFFENDLRFLKQFN.

Mg(2+) is bound at residue E259.

This sequence belongs to the class-II aminoacyl-tRNA synthetase family. Phe-tRNA synthetase alpha subunit type 1 subfamily. As to quaternary structure, tetramer of two alpha and two beta subunits. It depends on Mg(2+) as a cofactor.

The protein resides in the cytoplasm. It catalyses the reaction tRNA(Phe) + L-phenylalanine + ATP = L-phenylalanyl-tRNA(Phe) + AMP + diphosphate + H(+). The chain is Phenylalanine--tRNA ligase alpha subunit from Nitrosospira multiformis (strain ATCC 25196 / NCIMB 11849 / C 71).